The following is a 145-amino-acid chain: ATP synthase epsilon chain (145 aa).

It belongs to the ATPase epsilon chain family. In terms of assembly, F-type ATPases have 2 components, CF(1) - the catalytic core - and CF(0) - the membrane proton channel. CF(1) has five subunits: alpha(3), beta(3), gamma(1), delta(1), epsilon(1). CF(0) has three main subunits: a, b and c.

It is found in the cell inner membrane. Its function is as follows. Produces ATP from ADP in the presence of a proton gradient across the membrane. This is ATP synthase epsilon chain from Francisella tularensis subsp. mediasiatica (strain FSC147).